A 629-amino-acid polypeptide reads, in one-letter code: Iron multicopper oxidase fer1 (629 aa).

The signal sequence occupies residues 1 to 29 (MVAPQRRTVMPALGLLASSLCSLLLTANA). 2 Plastocyanin-like domains span residues 44 to 164 (VNPD…IHPD) and 175 to 338 (DDYT…TISY). Asparagine 58 and asparagine 69 each carry an N-linked (GlcNAc...) asparagine glycan. Residues histidine 91 and histidine 93 each coordinate Cu cation. Asparagine 98 is a glycosylation site (N-linked (GlcNAc...) asparagine). Histidine 144 and histidine 146 together coordinate Cu cation. Asparagine 188, asparagine 222, asparagine 236, asparagine 253, asparagine 303, asparagine 331, and asparagine 398 each carry an N-linked (GlcNAc...) asparagine glycan. The 137-residue stretch at 401-537 (YVAPQVPALF…LASIFIEAPD (137 aa)) folds into the Plastocyanin-like 3 domain. 3 residues coordinate Cu cation: histidine 452, histidine 455, and histidine 457. An N-linked (GlcNAc...) asparagine glycan is attached at asparagine 482. Residues histidine 517, cysteine 518, histidine 519, and histidine 523 each coordinate Cu cation. Asparagine 569 carries N-linked (GlcNAc...) asparagine glycosylation. Residues 592 to 612 (AIAAFTGCIITGLLGLATVVV) traverse the membrane as a helical segment.

This sequence belongs to the multicopper oxidase family. It depends on Cu cation as a cofactor.

The protein resides in the cell membrane. Its function is as follows. Iron transport multicopper oxidase, which is required for Fe(2+) high affinity uptake. May be required to oxidize Fe(2+) and release it from the transporter. Essential component of copper-dependent iron transport. This Mycosarcoma maydis (Corn smut fungus) protein is Iron multicopper oxidase fer1.